We begin with the raw amino-acid sequence, 908 residues long: Translation initiation factor IF-2 (908 aa).

The segment at 52–318 (QSHGQEEKRR…RSSQSSQHKF (267 aa)) is disordered. Residues 65-84 (KSKTTSTARVTGSSGKSKSV) are compositionally biased toward polar residues. 6 stretches are compositionally biased toward basic and acidic residues: residues 94–108 (FEKPDPEKMAEELAA), 120–138 (AAKDAEDRAATKKKSEERQ), 176–185 (IEVKPKDQPK), 193–238 (PKVE…EQMR), 270–280 (SFEKERREIKR), and 294–303 (KNQDEREIKN). Positions 409–578 (TRPPVVTIMG…SLQAELMELE (170 aa)) constitute a tr-type G domain. A G1 region spans residues 418–425 (GHVDHGKT). Residue 418-425 (GHVDHGKT) participates in GTP binding. Residues 443 to 447 (GITQH) are G2. Residues 464–467 (DTPG) are G3. GTP-binding positions include 464–468 (DTPGH) and 518–521 (NKMD). The tract at residues 518-521 (NKMD) is G4. The tract at residues 554-556 (SAK) is G5.

The protein belongs to the TRAFAC class translation factor GTPase superfamily. Classic translation factor GTPase family. IF-2 subfamily.

The protein resides in the cytoplasm. In terms of biological role, one of the essential components for the initiation of protein synthesis. Protects formylmethionyl-tRNA from spontaneous hydrolysis and promotes its binding to the 30S ribosomal subunits. Also involved in the hydrolysis of GTP during the formation of the 70S ribosomal complex. In Psychrobacter cryohalolentis (strain ATCC BAA-1226 / DSM 17306 / VKM B-2378 / K5), this protein is Translation initiation factor IF-2.